Here is a 381-residue protein sequence, read N- to C-terminus: MYQKILIRYGELTLKGQNKRDFINDLKRNLMFHIPKEQIKMEYDRAFLDFSLTNLDALKYVFGISSYSCVYEVESSLAAITSKVLDIAKQKYPFKTFAIAARRHNKNFEMNSNDLNRHLGCAILSNFEVKVNLEEPDLKIYVEVRDASTYIFIDYIAGLGGMPLNSAGQVLHLMSGGIDSPVAAYLLQKRGLRINFLNFITPPHTDEKTTQKVDELIKVIAKYQGSAKLYQVNFTDIMNYIGLVSNQKYKIILMRRSFYRIAQMLAKKLHIKALSNGENLAQVASQTLEAIHTVSAPITLPIFRPLLSFDKNETIKIAEKIGTMPISILKACETCELFAPKNPIIKPTPEEASELEKELDKLPELEKLAVENVTIKTISTL.

Residues 52-155 form the THUMP domain; sequence LTNLDALKYV…DASTYIFIDY (104 aa). ATP contacts are provided by residues 173–174, 198–199, arginine 255, glycine 277, and glutamine 286; these read LM and NF.

This sequence belongs to the ThiI family.

Its subcellular location is the cytoplasm. It catalyses the reaction [ThiI sulfur-carrier protein]-S-sulfanyl-L-cysteine + a uridine in tRNA + 2 reduced [2Fe-2S]-[ferredoxin] + ATP + H(+) = [ThiI sulfur-carrier protein]-L-cysteine + a 4-thiouridine in tRNA + 2 oxidized [2Fe-2S]-[ferredoxin] + AMP + diphosphate. The catalysed reaction is [ThiS sulfur-carrier protein]-C-terminal Gly-Gly-AMP + S-sulfanyl-L-cysteinyl-[cysteine desulfurase] + AH2 = [ThiS sulfur-carrier protein]-C-terminal-Gly-aminoethanethioate + L-cysteinyl-[cysteine desulfurase] + A + AMP + 2 H(+). It participates in cofactor biosynthesis; thiamine diphosphate biosynthesis. In terms of biological role, catalyzes the ATP-dependent transfer of a sulfur to tRNA to produce 4-thiouridine in position 8 of tRNAs, which functions as a near-UV photosensor. Also catalyzes the transfer of sulfur to the sulfur carrier protein ThiS, forming ThiS-thiocarboxylate. This is a step in the synthesis of thiazole, in the thiamine biosynthesis pathway. The sulfur is donated as persulfide by IscS. The chain is Probable tRNA sulfurtransferase from Metamycoplasma arthritidis (strain 158L3-1) (Mycoplasma arthritidis).